Reading from the N-terminus, the 86-residue chain is OMEGA-stichotoxin-Shd4a (86 aa).

Positions Met-1 to Ala-23 are cleaved as a signal peptide. A propeptide spanning residues Arg-24–Asn-36 is cleaved from the precursor. The EGF-like domain maps to Glu-40 to Asp-82. 3 disulfides stabilise this stretch: Cys-44/Cys-59, Cys-53/Cys-70, and Cys-72/Cys-81.

The protein belongs to the EGF domain peptide family.

It localises to the secreted. It is found in the nematocyst. Has both toxic and EGF activity. Its EGF activity consists of rounding cells (morphological change) and inducing tyrosine phosphorylation of the EGFR in A431 cells, but with a lower potency that human EGF. The chain is OMEGA-stichotoxin-Shd4a from Stichodactyla haddoni (Saddle carpet anemone).